A 746-amino-acid chain; its full sequence is Alpha-galactosidase 2 (746 aa).

The signal sequence occupies residues 1–26; the sequence is MLGAPSPRRLADVLAVTAGLVASVRA. Asparagine 43, asparagine 156, asparagine 180, asparagine 188, asparagine 360, asparagine 427, asparagine 446, and asparagine 495 each carry an N-linked (GlcNAc...) asparagine glycan. Residue aspartate 504 is the Nucleophile of the active site. Aspartate 566 serves as the catalytic Proton donor. N-linked (GlcNAc...) asparagine glycosylation is present at asparagine 714.

It belongs to the glycosyl hydrolase 27 family.

The protein resides in the secreted. It catalyses the reaction Hydrolysis of terminal, non-reducing alpha-D-galactose residues in alpha-D-galactosides, including galactose oligosaccharides, galactomannans and galactolipids.. Alpha-galactosidase involved in the degradation of simple oligosaccharides like melibiose, raffinose and stachyose, and of polymeric galacto(gluco)mannans. This chain is Alpha-galactosidase 2 (agl2), found in Hypocrea jecorina (Trichoderma reesei).